The sequence spans 260 residues: Phosphatidylglycerol--prolipoprotein diacylglyceryl transferase (260 aa).

The next 4 membrane-spanning stretches (helical) occupy residues 17–37 (VVKW…SWIF), 52–72 (LTAA…LHVI), 85–105 (ILSG…IGLW), and 113–133 (FNLG…QAIG). Arg134 is a binding site for a 1,2-diacyl-sn-glycero-3-phospho-(1'-sn-glycerol). 3 helical membrane passes run 170–190 (VPTQ…SLFI), 198–218 (GQLF…IGFV), and 227–247 (GLEQ…PFFI).

Belongs to the Lgt family.

It localises to the cell membrane. The catalysed reaction is L-cysteinyl-[prolipoprotein] + a 1,2-diacyl-sn-glycero-3-phospho-(1'-sn-glycerol) = an S-1,2-diacyl-sn-glyceryl-L-cysteinyl-[prolipoprotein] + sn-glycerol 1-phosphate + H(+). It participates in protein modification; lipoprotein biosynthesis (diacylglyceryl transfer). In terms of biological role, catalyzes the transfer of the diacylglyceryl group from phosphatidylglycerol to the sulfhydryl group of the N-terminal cysteine of a prolipoprotein, the first step in the formation of mature lipoproteins. This is Phosphatidylglycerol--prolipoprotein diacylglyceryl transferase from Dehalococcoides mccartyi (strain ATCC BAA-2266 / KCTC 15142 / 195) (Dehalococcoides ethenogenes (strain 195)).